The primary structure comprises 360 residues: Photosystem II protein D1 (360 aa).

Residues 1-28 (MTTTLQRRESANLWERFCNWVTSTDNRL) lie on the Cytoplasmic side of the membrane. The chain crosses the membrane as a helical span at residues 29-46 (YVGWFGVIMIPTLLAATI). The Lumenal portion of the chain corresponds to 47-117 (CFVIAFIAAP…NGGPYQLIIF (71 aa)). His-118 serves as a coordination point for chlorophyll a. Residues 118-133 (HFLLGASCYMGRQWEL) form a helical membrane-spanning segment. Pheophytin a is bound by residues Tyr-126 and Gln-130. Topologically, residues 134 to 141 (SYRLGMRP) are cytoplasmic. Residues 142–156 (WICVAYSAPLASAFA) form a helical membrane-spanning segment. Tyr-147 serves as a coordination point for pheophytin a. Over 157–196 (VFLIYPIGQGSFSDGMPLGISGTFNFMIVFQAEHNILMHP) the chain is Lumenal. 2 residues coordinate [CaMn4O5] cluster: Asp-170 and Glu-189. The helical transmembrane segment at 197 to 218 (FHQLGVAGVFGGALFCAMHGSL) threads the bilayer. His-198 is a chlorophyll a binding site. Position 214 (Met-214) interacts with pheophytin a. Residues His-215 and 264-265 (SF) contribute to the a quinone site. His-215 provides a ligand contact to Fe cation. Over 219–273 (VTSSLIRETTETESANYGYKFGQEEETYNIVAAHGYFGRLIFQYASFNNSRSLHF) the chain is Cytoplasmic. A Fe cation-binding site is contributed by His-272. The helical transmembrane segment at 274 to 288 (FLAAWRVVGVWFAAL) threads the bilayer. Topologically, residues 289–360 (GISTMAFNLN…VAMIAPSING (72 aa)) are lumenal. Positions 332, 333, 342, and 344 each coordinate [CaMn4O5] cluster. Residues 345 to 360 (SAESAPVAMIAPSING) constitute a propeptide that is removed on maturation.

The protein belongs to the reaction center PufL/M/PsbA/D family. In terms of assembly, PSII is composed of 1 copy each of membrane proteins PsbA, PsbB, PsbC, PsbD, PsbE, PsbF, PsbH, PsbI, PsbJ, PsbK, PsbL, PsbM, PsbT, PsbX, PsbY, PsbZ, Psb30/Ycf12, peripheral proteins PsbO, CyanoQ (PsbQ), PsbU, PsbV and a large number of cofactors. It forms dimeric complexes. The D1/D2 heterodimer binds P680, chlorophylls that are the primary electron donor of PSII, and subsequent electron acceptors. It shares a non-heme iron and each subunit binds pheophytin, quinone, additional chlorophylls, carotenoids and lipids. D1 provides most of the ligands for the Mn4-Ca-O5 cluster of the oxygen-evolving complex (OEC). There is also a Cl(-1) ion associated with D1 and D2, which is required for oxygen evolution. The PSII complex binds additional chlorophylls, carotenoids and specific lipids. is required as a cofactor. C-terminally processed by CtpA; processing is essential to allow assembly of the oxygen-evolving complex and thus photosynthetic growth. In terms of processing, tyr-161 forms a radical intermediate that is referred to as redox-active TyrZ, YZ or Y-Z.

The protein resides in the cellular thylakoid membrane. It catalyses the reaction 2 a plastoquinone + 4 hnu + 2 H2O = 2 a plastoquinol + O2. In terms of biological role, photosystem II (PSII) is a light-driven water:plastoquinone oxidoreductase that uses light energy to abstract electrons from H(2)O, generating O(2) and a proton gradient subsequently used for ATP formation. It consists of a core antenna complex that captures photons, and an electron transfer chain that converts photonic excitation into a charge separation. The D1/D2 (PsbA/PsbD) reaction center heterodimer binds P680, the primary electron donor of PSII as well as several subsequent electron acceptors. This Thermostichus vulcanus (Synechococcus vulcanus) protein is Photosystem II protein D1.